We begin with the raw amino-acid sequence, 67 residues long: ATP synthase protein 8 (67 aa).

A helical membrane pass occupies residues 8 to 24; the sequence is TWFTTVLSTTITLFILM. An N6-acetyllysine; alternate modification is found at Lys-54. Lys-54 bears the N6-succinyllysine; alternate mark. Lys-57 bears the N6-acetyllysine mark.

The protein belongs to the ATPase protein 8 family. As to quaternary structure, F-type ATPases have 2 components, CF(1) - the catalytic core - and CF(0) - the membrane proton channel. Component of an ATP synthase complex composed of ATP5PB, ATP5MC1, ATP5F1E, ATP5PD, ATP5ME, ATP5PF, ATP5MF, MT-ATP6, MT-ATP8, ATP5F1A, ATP5F1B, ATP5F1D, ATP5F1C, ATP5PO, ATP5MG, ATP5MK and ATP5MJ. Interacts with PRICKLE3.

It localises to the mitochondrion membrane. In terms of biological role, mitochondrial membrane ATP synthase (F(1)F(0) ATP synthase or Complex V) produces ATP from ADP in the presence of a proton gradient across the membrane which is generated by electron transport complexes of the respiratory chain. F-type ATPases consist of two structural domains, F(1) - containing the extramembraneous catalytic core and F(0) - containing the membrane proton channel, linked together by a central stalk and a peripheral stalk. During catalysis, ATP synthesis in the catalytic domain of F(1) is coupled via a rotary mechanism of the central stalk subunits to proton translocation. Part of the complex F(0) domain. Minor subunit located with subunit a in the membrane. The sequence is that of ATP synthase protein 8 (MT-ATP8) from Microtus pennsylvanicus (Meadow vole).